The primary structure comprises 108 residues: UPF0060 membrane protein Ent638_1931 (108 aa).

The next 4 membrane-spanning stretches (helical) occupy residues 6–26 (LLFFATALCEIIGCFLPWLWL), 29–49 (GASVFLLLPAGIALALFVWLL), 61–81 (AAYGGVYVCTALLWLRVVDGV), and 85–105 (AYDWAGALVALCGMLIIVAGW).

The protein belongs to the UPF0060 family.

The protein resides in the cell inner membrane. The sequence is that of UPF0060 membrane protein Ent638_1931 from Enterobacter sp. (strain 638).